A 142-amino-acid chain; its full sequence is ATP synthase epsilon chain (142 aa).

Belongs to the ATPase epsilon chain family. In terms of assembly, F-type ATPases have 2 components, CF(1) - the catalytic core - and CF(0) - the membrane proton channel. CF(1) has five subunits: alpha(3), beta(3), gamma(1), delta(1), epsilon(1). CF(0) has three main subunits: a, b and c.

Its subcellular location is the cell inner membrane. Produces ATP from ADP in the presence of a proton gradient across the membrane. In Maridesulfovibrio salexigens (strain ATCC 14822 / DSM 2638 / NCIMB 8403 / VKM B-1763) (Desulfovibrio salexigens), this protein is ATP synthase epsilon chain.